A 258-amino-acid polypeptide reads, in one-letter code: MNKVILRILALLFLLGIGAVSAQPDGRIVGGADTTNYHTKYVVQLRRRSSPSSSYAQTCGGCILDAVTIATAAHCVYNREAENFLVVAGDDSRGGMSGVVVRVSKLIPHELYNATIMDNDIALVIVDPPLPLASSSTMEAIEIAAEQPAVGVQATISGWGYTKENGLSSDQLQQVNVPVVDSEKCQEAYYWRPISEGMLCAGLSEGGKDACQGDSGGPLVVANKLAGIVSWGEGCARPNYPGVYANVAYFKDWIASRV.

The first 22 residues, 1–22, serve as a signal peptide directing secretion; it reads MNKVILRILALLFLLGIGAVSA. Residues 23–27 constitute a propeptide, activation peptide; the sequence is QPDGR. Residues 28–258 enclose the Peptidase S1 domain; the sequence is IVGGADTTNY…YFKDWIASRV (231 aa). Cysteines 59 and 75 form a disulfide. Residues histidine 74 and aspartate 120 each act as charge relay system in the active site. 2 disulfide bridges follow: cysteine 185-cysteine 200 and cysteine 211-cysteine 235. Residue serine 215 is the Charge relay system of the active site.

This sequence belongs to the peptidase S1 family.

The protein localises to the secreted. It localises to the extracellular space. It catalyses the reaction Preferential cleavage: Arg-|-Xaa, Lys-|-Xaa.. The chain is Trypsin eta (etaTry) from Drosophila erecta (Fruit fly).